A 194-amino-acid polypeptide reads, in one-letter code: Peptide deformylase (194 aa).

Positions 71 to 93 (DAEPEECGHDHGDGEGAHKHYPV) are disordered. The segment covering 76-93 (ECGHDHGDGEGAHKHYPV) has biased composition (basic and acidic residues). Cys-119 and His-161 together coordinate Fe cation. Glu-162 is an active-site residue. A Fe cation-binding site is contributed by His-165.

This sequence belongs to the polypeptide deformylase family. The cofactor is Fe(2+).

It catalyses the reaction N-terminal N-formyl-L-methionyl-[peptide] + H2O = N-terminal L-methionyl-[peptide] + formate. Functionally, removes the formyl group from the N-terminal Met of newly synthesized proteins. Requires at least a dipeptide for an efficient rate of reaction. N-terminal L-methionine is a prerequisite for activity but the enzyme has broad specificity at other positions. This is Peptide deformylase from Erythrobacter litoralis (strain HTCC2594).